The sequence spans 131 residues: Small ribosomal subunit protein uS8 (131 aa).

This sequence belongs to the universal ribosomal protein uS8 family. Part of the 30S ribosomal subunit. Contacts proteins S5 and S12.

In terms of biological role, one of the primary rRNA binding proteins, it binds directly to 16S rRNA central domain where it helps coordinate assembly of the platform of the 30S subunit. In Novosphingobium aromaticivorans (strain ATCC 700278 / DSM 12444 / CCUG 56034 / CIP 105152 / NBRC 16084 / F199), this protein is Small ribosomal subunit protein uS8.